We begin with the raw amino-acid sequence, 614 residues long: METVDTSERLTRLRQLMQERKVDVYIVPSEDSHQSEYIAPCDGRREFISGFSGSAGTAIISMTKAALSTDGRYFNQASKQLDSNWALLKRGVEGFPTWQEWTTEQAEGGKVVGVDPALVTPAGARSLSETLKKNGSSLVGVEQNLVDLVWGKDRPAPPREAVRVHPAQYAGKSFQEKISDLRKELENKKAAGIVISMLDEIAWLFNLRGTDIPYNPVFFSYALITPTTVDLYVDEDKLTPEVKAHLGQDVVIKPYDSIFADAKALSEARKQDATGAAPKFLLSNKASWALSLSLGGEEQVEEVRSPIADAKAIKNDVELAGMRSCHVRDGAALIEYFAWLENELINKKTTLDEVDAADKLEQIRSKHDLYAGLSFDTISSTGPNGAVIHYKPEKGSCSIIDPTAIYLCDSGAQYLDGTTDVTRTFHFGNPTDLEKKAFTLVLKGLISIDTAVFPKGTSGFALDALARQFLWKEGLDYLHGTGHGIGSYLNVHEGPMGIGTRVQYTEVPIAAGNVISDEPGFYEDGKFGIRIENVIMAREVQTTHKFGEKPWLGFEHVTTAPLGRNLINATLLSEDELKWVNEYHAEVWEKTHRFFENDDYTRSWLQRETQPISK.

Positions 409, 420, 518, and 532 each coordinate Mn(2+).

The protein belongs to the peptidase M24B family. Mn(2+) is required as a cofactor.

It catalyses the reaction Release of any N-terminal amino acid, including proline, that is linked to proline, even from a dipeptide or tripeptide.. Functionally, catalyzes the removal of a penultimate prolyl residue from the N-termini of peptides. The polypeptide is Probable Xaa-Pro aminopeptidase P (ampp) (Aspergillus niger (strain ATCC MYA-4892 / CBS 513.88 / FGSC A1513)).